We begin with the raw amino-acid sequence, 341 residues long: Casein kinase I isoform alpha (341 aa).

The region spanning 16 to 284 is the Protein kinase domain; it reads YKLIRKIGSG…YLRQLFRILF (269 aa). Residues 22 to 30 and Lys-45 contribute to the ATP site; that span reads IGSGSFGDI. The active-site Proton acceptor is Asp-135. The span at 306–320 shows a compositional bias: polar residues; that stretch reads QSQSSGVPGTNTTTQ. Residues 306–341 form a disordered region; sequence QSQSSGVPGTNTTTQGATVPSAGVPAGVAPGGTTPQ. The segment covering 321–341 has biased composition (low complexity); it reads GATVPSAGVPAGVAPGGTTPQ.

This sequence belongs to the protein kinase superfamily. CK1 Ser/Thr protein kinase family. Casein kinase I subfamily.

It carries out the reaction L-seryl-[protein] + ATP = O-phospho-L-seryl-[protein] + ADP + H(+). It catalyses the reaction L-threonyl-[protein] + ATP = O-phospho-L-threonyl-[protein] + ADP + H(+). The chain is Casein kinase I isoform alpha (kin-19) from Caenorhabditis elegans.